A 95-amino-acid polypeptide reads, in one-letter code: Glutamyl-tRNA(Gln) amidotransferase subunit C (95 aa).

This sequence belongs to the GatC family. As to quaternary structure, heterotrimer of A, B and C subunits.

It catalyses the reaction L-glutamyl-tRNA(Gln) + L-glutamine + ATP + H2O = L-glutaminyl-tRNA(Gln) + L-glutamate + ADP + phosphate + H(+). It carries out the reaction L-aspartyl-tRNA(Asn) + L-glutamine + ATP + H2O = L-asparaginyl-tRNA(Asn) + L-glutamate + ADP + phosphate + 2 H(+). In terms of biological role, allows the formation of correctly charged Asn-tRNA(Asn) or Gln-tRNA(Gln) through the transamidation of misacylated Asp-tRNA(Asn) or Glu-tRNA(Gln) in organisms which lack either or both of asparaginyl-tRNA or glutaminyl-tRNA synthetases. The reaction takes place in the presence of glutamine and ATP through an activated phospho-Asp-tRNA(Asn) or phospho-Glu-tRNA(Gln). This Caulobacter vibrioides (strain ATCC 19089 / CIP 103742 / CB 15) (Caulobacter crescentus) protein is Glutamyl-tRNA(Gln) amidotransferase subunit C.